Reading from the N-terminus, the 258-residue chain is Neurotrophin-3 (258 aa).

The first 18 residues, 1–18 (MSILFYVIFLAYLRGIQG), serve as a signal peptide directing secretion. A propeptide spanning residues 19-139 (NNMDQRSLPE…TNRTSPRRKR (121 aa)) is cleaved from the precursor. A disordered region spans residues 60–85 (QSTLPKAEAPREPEQGEATRSEFQPM). The segment covering 67–79 (EAPREPEQGEATR) has biased composition (basic and acidic residues). An N-linked (GlcNAc...) asparagine glycan is attached at Asn131. 3 cysteine pairs are disulfide-bonded: Cys153–Cys218, Cys196–Cys247, and Cys206–Cys249.

Belongs to the NGF-beta family. In terms of tissue distribution, brain and peripheral tissues.

The protein resides in the secreted. Functionally, seems to promote the survival of visceral and proprioceptive sensory neurons. The protein is Neurotrophin-3 (Ntf3) of Rattus norvegicus (Rat).